Here is a 726-residue protein sequence, read N- to C-terminus: MAPAKWLIASLAFASTGLAFTPEDFISAPRRGEAIPDPKGQFAVFPVSKYNFDTKDRPSGWNLLNLKTGDISVLTTDADVSEITWLGEGTNLLYVNGTDSVKGGVGIWISDAKNFGNAYKAGSIPGAFQGFKLAKSGDKINFVGYGQSTTKGDLYNEAAIEKPVSSARIYDSLFVRHWDAYVGTQFNAVFSGALTKNGNKYSFDGKLKNLVQPVKYAESPYPPFGGSGDYDLSPDGKTVAFMSKAPELPKANLTTSYIFTVPHDGSKVAEPINKRNGPRTPHGIEGASSSPVFSPDSKRIAYLQMATKNYESDRRVIHIAEVGSNKPAQRIASNWDRSPESIKWSSDGRTLYVTAEEHATGKLFTLPSDARDNHMPSAVKHDGSVSAFSFVGSSKSVLITGNSLWSNALYQIATPGRPNRKLFYANEHDPQLKGLGPNDIEPLWVDGARTKIHSWIVKPTGFDKNKVYPLAFLIHGGPQGSWGDNWSTRWNPRVWADQGYVVIAPNPTGSTGFGQKLTDDITNDWGGAPYKDLFKIWEHVRDNLKYVDTDNGIAAGASFGGFMINWIQGQELGRKFKALVSHDGTFVGSSKIGTDELFFIEHDFNGTFFEARQNYDRWDCSKPEYVAKWSTPQLVVHSDYDFRLSVAEGVGLFNVLQEKGVPSRLLNFPDESHCVTKPENSLVWHQQVLGWINKFSGINKSNPKAIKLSDCKVEVIDHEAGSYFDY.

A signal peptide spans 1-19 (MAPAKWLIASLAFASTGLA). Asparagine 96 and asparagine 252 each carry an N-linked (GlcNAc...) asparagine glycan. The segment at 268–292 (VAEPINKRNGPRTPHGIEGASSSPV) is disordered. Asparagine 485 is a glycosylation site (N-linked (GlcNAc...) asparagine). Serine 558 (charge relay system) is an active-site residue. Residue asparagine 605 is glycosylated (N-linked (GlcNAc...) asparagine). Residues aspartate 641 and histidine 673 each act as charge relay system in the active site. The N-linked (GlcNAc...) asparagine glycan is linked to asparagine 699.

It belongs to the peptidase S9C family.

It is found in the secreted. Functionally, extracellular dipeptidyl-peptidase which removes N-terminal dipeptides sequentially from polypeptides having unsubstituted N-termini. Contributes to pathogenicity. The sequence is that of Dipeptidyl-peptidase 5 (DPP5) from Arthroderma otae (Microsporum canis).